The primary structure comprises 72 residues: Mitotic-spindle organizing protein 1 (72 aa).

This sequence belongs to the MOZART1 family. As to quaternary structure, part of the gamma-tubulin complex.

The protein localises to the cytoplasm. It is found in the cytoskeleton. It localises to the microtubule organizing center. The protein resides in the spindle pole body. Required for gamma-tubulin complex recruitment to the microtubule organizing center (MTOC). The sequence is that of Mitotic-spindle organizing protein 1 from Cryptococcus neoformans var. neoformans serotype D (strain B-3501A) (Filobasidiella neoformans).